A 311-amino-acid polypeptide reads, in one-letter code: MKVAVIGAAGGIGQALALLLKNRLPAGSDLALYDIAPVTPGVAADLSHIPTPVSIKGYCGEDPTPALEGADVVLISAGVARKPGMDRSDLFNINAGIVKSLTEKIAVTCPKACIGIITNPVNTTVAIAAEVLKKAGVYDKNKLFGVTTLDVIRSETFVAELKDKDPGEIRVPVIGGHSGVTILPLLSQVEGVEFTAEEVAALTPRIQNAGTEVVEAKAGGGSATLSMGQAACRFGLSLVKALSGEQGVVECAYVEGNGEHARFFAQPILLGKNGVEEIQSYGELSAFEQEALESMLDTLRGDIKIGEEFVQ.

NAD(+) is bound by residues 7–13 (GAAGGIG) and Asp34. Substrate-binding residues include Arg81 and Arg87. Residues Asn94 and 117–119 (ITN) each bind NAD(+). The substrate site is built by Asn119 and Arg153. Catalysis depends on His177, which acts as the Proton acceptor. Met227 is an NAD(+) binding site.

The protein belongs to the LDH/MDH superfamily. MDH type 1 family. As to quaternary structure, homodimer.

The catalysed reaction is (S)-malate + NAD(+) = oxaloacetate + NADH + H(+). Its function is as follows. Catalyzes the reversible oxidation of malate to oxaloacetate. The polypeptide is Malate dehydrogenase (Aliivibrio fischeri (strain MJ11) (Vibrio fischeri)).